The sequence spans 419 residues: Ras association domain-containing protein 8 (419 aa).

The 82-residue stretch at 1 to 82 (MELKVWVDGV…VQLILRRTGP (82 aa)) folds into the Ras-associating domain. Ser-105 and Ser-129 each carry phosphoserine. Thr-131 carries the phosphothreonine modification. Residues 372-399 (ASQADIETEAPFQSGSLKRPGSSRQLPS) are disordered. Polar residues predominate over residues 382-399 (PFQSGSLKRPGSSRQLPS). Position 387 is a phosphoserine (Ser-387).

The chain is Ras association domain-containing protein 8 (Rassf8) from Mus musculus (Mouse).